The primary structure comprises 231 residues: Biosynthetic peptidoglycan transglycosylase (231 aa).

Residues 10–30 traverse the membrane as a helical segment; it reads LLLLGLIGLFLVWQLWLLGWV.

Belongs to the glycosyltransferase 51 family.

It is found in the cell inner membrane. It catalyses the reaction [GlcNAc-(1-&gt;4)-Mur2Ac(oyl-L-Ala-gamma-D-Glu-L-Lys-D-Ala-D-Ala)](n)-di-trans,octa-cis-undecaprenyl diphosphate + beta-D-GlcNAc-(1-&gt;4)-Mur2Ac(oyl-L-Ala-gamma-D-Glu-L-Lys-D-Ala-D-Ala)-di-trans,octa-cis-undecaprenyl diphosphate = [GlcNAc-(1-&gt;4)-Mur2Ac(oyl-L-Ala-gamma-D-Glu-L-Lys-D-Ala-D-Ala)](n+1)-di-trans,octa-cis-undecaprenyl diphosphate + di-trans,octa-cis-undecaprenyl diphosphate + H(+). Its pathway is cell wall biogenesis; peptidoglycan biosynthesis. Its function is as follows. Peptidoglycan polymerase that catalyzes glycan chain elongation from lipid-linked precursors. This Dechloromonas aromatica (strain RCB) protein is Biosynthetic peptidoglycan transglycosylase.